We begin with the raw amino-acid sequence, 758 residues long: Probable TonB-dependent receptor NMB0964 (758 aa).

A signal peptide spans 1–24 (MAQTTLKPIVLSILLINTPLLAQA). One can recognise a TBDR plug domain in the interval 50–161 (LLHTSTASDK…VAGLVDVADG (112 aa)). The region spanning 171–758 (GVSGELGLRL…SFTGGVNVKF (588 aa)) is the TBDR beta-barrel domain. Residues 741 to 758 (SDTPQMGRSFTGGVNVKF) carry the TonB C-terminal box motif.

It belongs to the TonB-dependent receptor family.

The protein resides in the cell outer membrane. Its function is as follows. Probable receptor, TonB-dependent. This chain is Probable TonB-dependent receptor NMB0964, found in Neisseria meningitidis serogroup B (strain ATCC BAA-335 / MC58).